The primary structure comprises 357 residues: Eukaryotic translation initiation factor 3 subunit F (357 aa).

Positions 30–169 constitute an MPN domain; the sequence is VHIQPQAVFS…TKAYISAPVA (140 aa). The interval 309–357 is disordered; it reads VGGDKEGGEKGKDGEDGGRGGRGGKRGGGGRGGHRGEPREPREPREPAE. 2 stretches are compositionally biased toward basic and acidic residues: residues 311-327 and 342-357; these read GDKEGGEKGKDGEDGGR and HRGEPREPREPREPAE.

Belongs to the eIF-3 subunit F family. As to quaternary structure, component of the eukaryotic translation initiation factor 3 (eIF-3) complex.

It localises to the cytoplasm. Functionally, component of the eukaryotic translation initiation factor 3 (eIF-3) complex, which is involved in protein synthesis of a specialized repertoire of mRNAs and, together with other initiation factors, stimulates binding of mRNA and methionyl-tRNAi to the 40S ribosome. The eIF-3 complex specifically targets and initiates translation of a subset of mRNAs involved in cell proliferation. This Chaetomium globosum (strain ATCC 6205 / CBS 148.51 / DSM 1962 / NBRC 6347 / NRRL 1970) (Soil fungus) protein is Eukaryotic translation initiation factor 3 subunit F.